A 276-amino-acid polypeptide reads, in one-letter code: Integrin-binding sialoprotein (276 aa).

Residues 1 to 16 (MRSALLLACLLATASA) form the signal peptide. The disordered stretch occupies residues 54-251 (HRYKGSDSSE…EEPARGDSYR (198 aa)). A compositionally biased stretch (acidic residues) spans 61 to 75 (SSEEEGDGSEEEEEG). The span at 106–119 (QDCKGGQKGTRGDS) shows a compositional bias: basic and acidic residues. The short motif at 116–118 (RGD) is the Cell attachment site element. The span at 120–144 (GDEDSDEEEEEEEEEEEEEEVEEQD) shows a compositional bias: acidic residues. Residues 145–165 (VSVNGTSTNTTAETPHGNNTV) show a composition bias toward polar residues. 3 N-linked (GlcNAc...) asparagine glycosylation sites follow: asparagine 148, asparagine 153, and asparagine 162. Acidic residues predominate over residues 167–188 (AEEEEDDDEEEEEEEEEEEEAE). Residues 189–200 (ATTAAATTAQDE) are compositionally biased toward low complexity. The short motif at 228 to 230 (RGD) is the Cell attachment site element. Positions 246–248 (RGD) match the Integrin-binding motif motif. A sulfotyrosine mark is found at tyrosine 272 and tyrosine 273.

As to quaternary structure, monomer. Interacts with integrins; the interaction promotes cell adhesion. In terms of processing, phosphorylated on serine and threonine residues.

It localises to the secreted. Binds tightly to hydroxyapatite. Appears to form an integral part of the mineralized matrix. Probably important to cell-matrix interaction. Promotes adhesion and migration of various cells via the alpha-V/beta-3 integrin receptor (ITGAV:ITGB3). The polypeptide is Integrin-binding sialoprotein (IBSP) (Gallus gallus (Chicken)).